A 201-amino-acid chain; its full sequence is Kunitz type trypsin inhibitor 104 (201 aa).

Residues 1–24 (MSTRSLTIFILAHVWLLMATTSIA) form the signal peptide. Disulfide bonds link C63–C110, C161–C173, and C166–C169.

Belongs to the protease inhibitor I3 (leguminous Kunitz-type inhibitor) family. Interacts with CP.

The protein resides in the secreted. It is found in the extracellular space. Its subcellular location is the apoplast. In terms of biological role, protease inhibitor involved in the control of mycorrhiza establishment and arbuscule development during root colonization by arbuscular mycorrhizal (AM) fungi (e.g. Rhizophagus irregularis). In Medicago truncatula (Barrel medic), this protein is Kunitz type trypsin inhibitor 104.